The primary structure comprises 364 residues: Transcription elongation factor, mitochondrial (364 aa).

The transit peptide at 1–39 (MAWRTNLACLIKAGGRRWFPVPEYSSLPPVLNNTCSVRK) directs the protein to the mitochondrion.

It belongs to the TEFM family. In terms of assembly, interacts with POLRMT.

It localises to the mitochondrion matrix. Its subcellular location is the mitochondrion nucleoid. Transcription elongation factor which increases mitochondrial RNA polymerase processivity. Regulates transcription of the mitochondrial genome, including genes important for the oxidative phosphorylation machinery. The sequence is that of Transcription elongation factor, mitochondrial (Tefm) from Mus musculus (Mouse).